Consider the following 301-residue polypeptide: Light-independent protochlorophyllide reductase iron-sulfur ATP-binding protein (301 aa).

Residues Met1 to Glu26 are disordered. ATP-binding positions include Gly44 to Thr49 and Lys73. Position 48 (Ser48) interacts with Mg(2+). Residues Cys129 and Cys163 each contribute to the [4Fe-4S] cluster site. Position 214–215 (Asn214–Arg215) interacts with ATP.

The protein belongs to the NifH/BchL/ChlL family. As to quaternary structure, homodimer. Protochlorophyllide reductase is composed of three subunits; BchL, BchN and BchB. Requires [4Fe-4S] cluster as cofactor.

It catalyses the reaction chlorophyllide a + oxidized 2[4Fe-4S]-[ferredoxin] + 2 ADP + 2 phosphate = protochlorophyllide a + reduced 2[4Fe-4S]-[ferredoxin] + 2 ATP + 2 H2O. It functions in the pathway porphyrin-containing compound metabolism; bacteriochlorophyll biosynthesis (light-independent). Functionally, component of the dark-operative protochlorophyllide reductase (DPOR) that uses Mg-ATP and reduced ferredoxin to reduce ring D of protochlorophyllide (Pchlide) to form chlorophyllide a (Chlide). This reaction is light-independent. The L component serves as a unique electron donor to the NB-component of the complex, and binds Mg-ATP. The protein is Light-independent protochlorophyllide reductase iron-sulfur ATP-binding protein of Halorhodospira halophila (strain DSM 244 / SL1) (Ectothiorhodospira halophila (strain DSM 244 / SL1)).